A 502-amino-acid chain; its full sequence is Probable malate:quinone oxidoreductase 1 (502 aa).

This sequence belongs to the MQO family. FAD is required as a cofactor.

It carries out the reaction (S)-malate + a quinone = a quinol + oxaloacetate. The protein operates within carbohydrate metabolism; tricarboxylic acid cycle; oxaloacetate from (S)-malate (quinone route): step 1/1. This Pseudomonas putida (strain ATCC 47054 / DSM 6125 / CFBP 8728 / NCIMB 11950 / KT2440) protein is Probable malate:quinone oxidoreductase 1.